Here is a 422-residue protein sequence, read N- to C-terminus: UDP-N-acetylglucosamine 1-carboxyvinyltransferase (422 aa).

22–23 (KN) lines the phosphoenolpyruvate pocket. Residue Arg-93 coordinates UDP-N-acetyl-alpha-D-glucosamine. Cys-117 (proton donor) is an active-site residue. Cys-117 carries the 2-(S-cysteinyl)pyruvic acid O-phosphothioketal modification. UDP-N-acetyl-alpha-D-glucosamine-binding positions include 122-126 (RPVDL), 162-165 (KVSV), Asp-307, and Ile-329.

It belongs to the EPSP synthase family. MurA subfamily.

The protein resides in the cytoplasm. It carries out the reaction phosphoenolpyruvate + UDP-N-acetyl-alpha-D-glucosamine = UDP-N-acetyl-3-O-(1-carboxyvinyl)-alpha-D-glucosamine + phosphate. Its pathway is cell wall biogenesis; peptidoglycan biosynthesis. Its function is as follows. Cell wall formation. Adds enolpyruvyl to UDP-N-acetylglucosamine. In Hamiltonella defensa subsp. Acyrthosiphon pisum (strain 5AT), this protein is UDP-N-acetylglucosamine 1-carboxyvinyltransferase.